A 446-amino-acid polypeptide reads, in one-letter code: UDP-N-acetylglucosamine--dolichyl-phosphate N-acetylglucosaminephosphotransferase (446 aa).

2 helical membrane passes run 1–21 (MIES…LMNQ) and 25–45 (PLLS…MFIP). UDP-N-acetyl-alpha-D-glucosamine is bound by residues 59–61 (KDM) and Glu-71. 2 consecutive transmembrane segments (helical) span residues 73-93 (MGAV…PVLF) and 123-143 (LLGA…LGIL). Lys-154 provides a ligand contact to dolichyl phosphate. 2 helical membrane passes run 155-175 (FFLP…DYGV) and 191-211 (SLIN…IFCP). Position 208-216 (208-216 (IFCPNSINI)) interacts with dolichyl phosphate. Asn-215 lines the Mg(2+) pocket. The next 4 helical transmembrane spans lie at 216-236 (IIAG…LVIA), 254-274 (AHLL…GLLK), 282-302 (VFVG…VGIL), and 311-331 (LFFI…FGLV). Residue Asn-221 coordinates UDP-N-acetyl-alpha-D-glucosamine. Residue Asp-286 coordinates Mg(2+). UDP-N-acetyl-alpha-D-glucosamine is bound at residue 335 to 337 (RHR). An N-linked (GlcNAc...) asparagine glycan is attached at Asn-395. A helical transmembrane segment spans residues 412–432 (DHLTICIMGLQLLTGIFGLII).

It belongs to the glycosyltransferase 4 family. Mg(2+) is required as a cofactor.

The protein localises to the endoplasmic reticulum membrane. The enzyme catalyses a di-trans,poly-cis-dolichyl phosphate + UDP-N-acetyl-alpha-D-glucosamine = an N-acetyl-alpha-D-glucosaminyl-diphospho-di-trans,poly-cis-dolichol + UMP. It participates in protein modification; protein glycosylation. Its activity is regulated as follows. Inhibited by natural nucleoside antibiotic tunicamycin, which acts as a structural analog and competitor of UDP-GlcNAc. Its function is as follows. UDP-N-acetylglucosamine--dolichyl-phosphate N-acetylglucosaminephosphotransferase that operates in the biosynthetic pathway of dolichol-linked oligosaccharides, the glycan precursors employed in protein asparagine (N)-glycosylation. The assembly of dolichol-linked oligosaccharides begins on the cytosolic side of the endoplasmic reticulum membrane and finishes in its lumen. The sequential addition of sugars to dolichol pyrophosphate produces dolichol-linked oligosaccharides containing fourteen sugars, including two GlcNAcs, nine mannoses and three glucoses. Once assembled, the oligosaccharide is transferred from the lipid to nascent proteins by oligosaccharyltransferases. Catalyzes the initial step of dolichol-linked oligosaccharide biosynthesis, transfering GlcNAc-1-P from cytosolic UDP-GlcNAc onto the carrier lipid dolichyl phosphate (P-dolichol), yielding GlcNAc-P-P-dolichol embedded in the cytoplasmic leaflet of the endoplasmic reticulum membrane. The protein is UDP-N-acetylglucosamine--dolichyl-phosphate N-acetylglucosaminephosphotransferase (gpt2) of Schizosaccharomyces pombe (strain 972 / ATCC 24843) (Fission yeast).